Reading from the N-terminus, the 228-residue chain is 7-cyano-7-deazaguanine synthase (228 aa).

Phe16 to Leu26 is a binding site for ATP. Positions 193, 201, 204, and 207 each coordinate Zn(2+).

It belongs to the QueC family. Zn(2+) serves as cofactor.

It carries out the reaction 7-carboxy-7-deazaguanine + NH4(+) + ATP = 7-cyano-7-deazaguanine + ADP + phosphate + H2O + H(+). It functions in the pathway purine metabolism; 7-cyano-7-deazaguanine biosynthesis. Functionally, catalyzes the ATP-dependent conversion of 7-carboxy-7-deazaguanine (CDG) to 7-cyano-7-deazaguanine (preQ(0)). This is 7-cyano-7-deazaguanine synthase from Pasteurella multocida (strain Pm70).